A 280-amino-acid polypeptide reads, in one-letter code: Phosphatidylglycerol--prolipoprotein diacylglyceryl transferase (280 aa).

4 helical membrane passes run 30 to 50 (WYGLAYVVGILLGWFYARRIV), 71 to 91 (FLLWAAGGIVLGGRIGYILFY), 106 to 126 (IWNGGMSFHGGLVGTTLAMII), and 132 to 152 (AIPIWSLFDVVAAVVPIGLFF). A 1,2-diacyl-sn-glycero-3-phospho-(1'-sn-glycerol) is bound at residue R154. 3 helical membrane passes run 188-208 (QLYEAALEGLVLLAVLAWFVY), 217-237 (GLVTGIFVCGYAASRIFVEFF), and 251-271 (WLTMGMVLSVPMALIGIWAIA).

This sequence belongs to the Lgt family.

Its subcellular location is the cell inner membrane. It catalyses the reaction L-cysteinyl-[prolipoprotein] + a 1,2-diacyl-sn-glycero-3-phospho-(1'-sn-glycerol) = an S-1,2-diacyl-sn-glyceryl-L-cysteinyl-[prolipoprotein] + sn-glycerol 1-phosphate + H(+). It participates in protein modification; lipoprotein biosynthesis (diacylglyceryl transfer). Catalyzes the transfer of the diacylglyceryl group from phosphatidylglycerol to the sulfhydryl group of the N-terminal cysteine of a prolipoprotein, the first step in the formation of mature lipoproteins. This chain is Phosphatidylglycerol--prolipoprotein diacylglyceryl transferase, found in Sinorhizobium medicae (strain WSM419) (Ensifer medicae).